A 595-amino-acid polypeptide reads, in one-letter code: Apolipoprotein N-acyltransferase 2 (595 aa).

5 helical membrane-spanning segments follow: residues 30–50 (FLAF…FGFF), 63–83 (LFFH…HWII), 95–115 (VVAI…FPIF), 167–187 (AEIT…YTLF), and 210–230 (FITL…FLFK). A CN hydrolase domain is found at 241 to 555 (LNVLIVQPDA…AEALSETIDV (315 aa)). Glu293 acts as the Proton acceptor in catalysis. Residue Lys372 is part of the active site. Cys463 functions as the Nucleophile in the catalytic mechanism. The chain crosses the membrane as a helical span at residues 569–589 (LIPWLMLFLTGIYYLNLLIGI).

Belongs to the CN hydrolase family. Apolipoprotein N-acyltransferase subfamily.

Its subcellular location is the cell inner membrane. It catalyses the reaction N-terminal S-1,2-diacyl-sn-glyceryl-L-cysteinyl-[lipoprotein] + a glycerophospholipid = N-acyl-S-1,2-diacyl-sn-glyceryl-L-cysteinyl-[lipoprotein] + a 2-acyl-sn-glycero-3-phospholipid + H(+). The protein operates within protein modification; lipoprotein biosynthesis (N-acyl transfer). Functionally, catalyzes the phospholipid dependent N-acylation of the N-terminal cysteine of apolipoprotein, the last step in lipoprotein maturation. The polypeptide is Apolipoprotein N-acyltransferase 2 (Leptospira interrogans serogroup Icterohaemorrhagiae serovar Lai (strain 56601)).